The chain runs to 113 residues: EVKLEESGGGLVQPGGSMKLSCVASGFTFSNYWMNWVRQSPEKGLEWVAEIRLKSHNYETHYAESVKGRFTISRDDSKSSVYLQMNILRAEDTGIYYCTTGFAYWGQGTLVTV.

Residues 1–113 enclose the Ig-like domain; it reads EVKLEESGGG…YWGQGTLVTV (113 aa). A disulfide bridge links cysteine 22 with cysteine 98.

This Mus musculus (Mouse) protein is Ig heavy chain V-III region T957.